The sequence spans 537 residues: Phosphoenolpyruvate carboxykinase (ATP) (537 aa).

Substrate contacts are provided by R61, Y195, and K201. Residues K201, H220, and G236–T244 contribute to the ATP site. Mn(2+) is bound by residues K201 and H220. Mn(2+) is bound at residue D257. ATP contacts are provided by E285, R323, and T448. R323 is a substrate binding site.

It belongs to the phosphoenolpyruvate carboxykinase (ATP) family. It depends on Mn(2+) as a cofactor.

The protein resides in the cytoplasm. The catalysed reaction is oxaloacetate + ATP = phosphoenolpyruvate + ADP + CO2. Its pathway is carbohydrate biosynthesis; gluconeogenesis. Involved in the gluconeogenesis. Catalyzes the conversion of oxaloacetate (OAA) to phosphoenolpyruvate (PEP) through direct phosphoryl transfer between the nucleoside triphosphate and OAA. This chain is Phosphoenolpyruvate carboxykinase (ATP), found in Azorhizobium caulinodans (strain ATCC 43989 / DSM 5975 / JCM 20966 / LMG 6465 / NBRC 14845 / NCIMB 13405 / ORS 571).